A 451-amino-acid chain; its full sequence is Phosphoglucosamine mutase (451 aa).

Residue S101 is the Phosphoserine intermediate of the active site. S101, D242, D244, and D246 together coordinate Mg(2+). Phosphoserine is present on S101.

Belongs to the phosphohexose mutase family. Mg(2+) serves as cofactor. Post-translationally, activated by phosphorylation.

It catalyses the reaction alpha-D-glucosamine 1-phosphate = D-glucosamine 6-phosphate. Its function is as follows. Catalyzes the conversion of glucosamine-6-phosphate to glucosamine-1-phosphate. The sequence is that of Phosphoglucosamine mutase from Beijerinckia indica subsp. indica (strain ATCC 9039 / DSM 1715 / NCIMB 8712).